Reading from the N-terminus, the 284-residue chain is TM2 domain-containing protein almondex (284 aa).

Positions M1–T32 are cleaved as a signal peptide. A disordered region spans residues A33–D63. Residues A33–T225 lie on the Extracellular side of the membrane. A compositionally biased stretch (basic and acidic residues) spans S42–N51. Residues S52–D63 show a composition bias toward low complexity. N-linked (GlcNAc...) asparagine glycosylation is found at N53, N89, N141, N194, N206, and N216. A TM2 domain is found at G220–V267. Residues A226–W246 form a helical membrane-spanning segment. The Cytoplasmic portion of the chain corresponds to Q247–G249. The helical transmembrane segment at I250 to I270 threads the bilayer. At S271–I284 the chain is on the extracellular side.

The protein belongs to the TM2 family. As to expression, expressed in female ovary, mainly in nurse cells (at protein level). Expressed in the brain at low levels (at protein level).

It localises to the membrane. It is found in the vesicle. Positive regulator of Notch signaling during lateral inhibition and boundary formation. Interacts with Notch signaling at the membrane, at the level of gamma-secretase-mediated S3 cleavage. May regulate Notch signaling by regulating the subcellular localization of N/Notch in a context dependent manner. Maternal neurogenic factor involved in Notch signaling-dependent mesectodermal and neuroectodermal specification during early embryogenesis. Functions cooperatively with bisc/TM2D1 and amrt/TM2D2. Required for maintenance of neuronal function. Involved in imaginal specification of eyes and wings. The sequence is that of TM2 domain-containing protein almondex from Drosophila melanogaster (Fruit fly).